A 399-amino-acid chain; its full sequence is Elongation factor Tu (399 aa).

The tr-type G domain occupies 10–209 (NPHVNIGTIG…EVDSYIPTPE (200 aa)). The interval 19 to 26 (GHVYHGKT) is G1. 19-26 (GHVYHGKT) lines the GTP pocket. A Mg(2+)-binding site is contributed by Thr26. Residues 60 to 64 (GITIA) are G2. The segment at 81-84 (DCPG) is G3. GTP-binding positions include 81–85 (DCPGH) and 136–139 (NKQD). A G4 region spans residues 136 to 139 (NKQD). A G5 region spans residues 174 to 176 (SAL).

This sequence belongs to the TRAFAC class translation factor GTPase superfamily. Classic translation factor GTPase family. EF-Tu/EF-1A subfamily. Monomer.

It is found in the cytoplasm. The catalysed reaction is GTP + H2O = GDP + phosphate + H(+). Functionally, GTP hydrolase that promotes the GTP-dependent binding of aminoacyl-tRNA to the A-site of ribosomes during protein biosynthesis. The sequence is that of Elongation factor Tu from Helicobacter pylori (strain J99 / ATCC 700824) (Campylobacter pylori J99).